We begin with the raw amino-acid sequence, 503 residues long: Cysteine desulfurase, mitochondrial (503 aa).

The N-terminal 27 residues, 1–27 (MSNIAPQVLRHASRACSRRLSLSASLV), are a transit peptide targeting the mitochondrion. Positions 34–50 (RTVTGSGSGGRRYVSGS) are enriched in low complexity. A disordered region spans residues 34–58 (RTVTGSGSGGRRYVSGSQRHNAQAQ). Pyridoxal 5'-phosphate is bound by residues 172–173 (AT), Asn-254, Gln-282, and 302–304 (SGH). The residue at position 305 (Lys-305) is an N6-(pyridoxal phosphate)lysine. Position 342 (Thr-342) interacts with pyridoxal 5'-phosphate. Cys-427 (cysteine persulfide intermediate) is an active-site residue. Cys-427 lines the [2Fe-2S] cluster pocket.

Belongs to the class-V pyridoxal-phosphate-dependent aminotransferase family. NifS/IscS subfamily. The cofactor is pyridoxal 5'-phosphate.

The protein localises to the mitochondrion. The enzyme catalyses (sulfur carrier)-H + L-cysteine = (sulfur carrier)-SH + L-alanine. Its function is as follows. Catalyzes the removal of elemental sulfur from cysteine to produce alanine. It supplies the inorganic sulfur for iron-sulfur (Fe-S) clusters. Plays a role in both tRNA-processing and mitochondrial metabolism. Involved in the 2-thio-modification of both 5-carboxymethylaminomethyl-2-thiouridine in mitochondrial tRNAs and 5-methoxycarbonylmethyl-2-thiouridine (mcm5s2U) in cytoplasmic tRNAs. The sequence is that of Cysteine desulfurase, mitochondrial from Arthroderma benhamiae (strain ATCC MYA-4681 / CBS 112371) (Trichophyton mentagrophytes).